The sequence spans 238 residues: tRNA (guanine-N(7)-)-methyltransferase (238 aa).

Residues E71, E96, D123, and D146 each contribute to the S-adenosyl-L-methionine site. D146 is an active-site residue. Residues K150, D182, and 217–220 (TKFE) contribute to the substrate site.

Belongs to the class I-like SAM-binding methyltransferase superfamily. TrmB family.

It carries out the reaction guanosine(46) in tRNA + S-adenosyl-L-methionine = N(7)-methylguanosine(46) in tRNA + S-adenosyl-L-homocysteine. It functions in the pathway tRNA modification; N(7)-methylguanine-tRNA biosynthesis. Catalyzes the formation of N(7)-methylguanine at position 46 (m7G46) in tRNA. The sequence is that of tRNA (guanine-N(7)-)-methyltransferase from Methylobacillus flagellatus (strain ATCC 51484 / DSM 6875 / VKM B-1610 / KT).